The primary structure comprises 143 residues: Putative pre-16S rRNA nuclease (143 aa).

This sequence belongs to the YqgF nuclease family.

It is found in the cytoplasm. Its function is as follows. Could be a nuclease involved in processing of the 5'-end of pre-16S rRNA. The sequence is that of Putative pre-16S rRNA nuclease from Lactobacillus johnsonii (strain CNCM I-12250 / La1 / NCC 533).